Here is a 188-residue protein sequence, read N- to C-terminus: Elongation factor P (188 aa).

It belongs to the elongation factor P family.

The protein resides in the cytoplasm. It participates in protein biosynthesis; polypeptide chain elongation. Functionally, involved in peptide bond synthesis. Stimulates efficient translation and peptide-bond synthesis on native or reconstituted 70S ribosomes in vitro. Probably functions indirectly by altering the affinity of the ribosome for aminoacyl-tRNA, thus increasing their reactivity as acceptors for peptidyl transferase. The chain is Elongation factor P from Pelodictyon phaeoclathratiforme (strain DSM 5477 / BU-1).